The primary structure comprises 297 residues: Oxidoreductase aprR (297 aa).

Belongs to the NmrA-type oxidoreductase family. Isoflavone reductase subfamily.

It functions in the pathway secondary metabolite biosynthesis. Functionally, oxidoreductase; part of the gene cluster that mediates the biosynthesis of the asperipin-2a, a bicyclic peptide that possesses two macrocyclic ether rings consisting of 14- and 17-membered paracyclophans. The pathway starts with the processing of the precursor aprA by kexin proteases to produce 11 identical copies of the hexapeptide Phe-Tyr-Tyr-Thr-Gly-Tyr. Macrocyclization of asperipin-2a may accompany an alpha-hydroxylation-dehydration sequence to give an imine, which is readily hydrolyzed to yield putative ketone intermediate. The reductase aprR may be required for the final reduction to yield asperipin-2a. The polypeptide is Oxidoreductase aprR (Aspergillus flavus (strain ATCC 200026 / FGSC A1120 / IAM 13836 / NRRL 3357 / JCM 12722 / SRRC 167)).